The primary structure comprises 749 residues: cGMP-dependent protein kinase egl-4 (749 aa).

Residues 30 to 96 adopt a coiled-coil conformation; that stretch reads EAHELQKLIP…LEQKAQSAAS (67 aa). The interval 87-111 is disordered; sequence LEQKAQSAASPGQPPSPSPRTDQLG. 3',5'-cyclic GMP-binding positions include 234–237, 244–245, R349, 358–361, 368–369, and Y403; these read GELA, RT, and GERA. In terms of domain architecture, Protein kinase spans 438–698; sequence VKRLATLGVG…VNDIRKHRWF (261 aa). ATP contacts are provided by residues 444–452 and K468; that span reads LGVGGFGRV. The short motif at 461–473 is the Nuclear localization signal element; the sequence is KSKTYALKALKKK. The active-site Proton acceptor is D562. An AGC-kinase C-terminal domain is found at 699–749; sequence MGFDWEGLRTKTLKPPILPKVNNPADVTNFDNYPPDNDVPPDEFSGWDEGF. The segment at 723–749 is disordered; that stretch reads ADVTNFDNYPPDNDVPPDEFSGWDEGF.

It belongs to the protein kinase superfamily. AGC Ser/Thr protein kinase family. cGMP subfamily. Mg(2+) serves as cofactor. Autophosphorylated.

The protein localises to the cytoplasm. It localises to the nucleus. The catalysed reaction is L-seryl-[protein] + ATP = O-phospho-L-seryl-[protein] + ADP + H(+). It catalyses the reaction L-threonyl-[protein] + ATP = O-phospho-L-threonyl-[protein] + ADP + H(+). With respect to regulation, binding of cGMP results in enzyme activation. Promotes chemoreceptor gene expression in response to increased cGMP levels by antagonizing the gene repression functions of the class II HDAC hda-4 and the mef-2 transcription factor. Regulates gene expression via recruitment of a histone deacetylase complex containing hda-2, saeg-1 and saeg-2. Represses body size and lifespan through the dbl-1 and insulin pathways, respectively. May also signal through daf-3 and/or daf-5. Role in egg-laying, dauer formation and motility. Regulates behavioral responses to various chemosensory stimuli in sensory neurons. Required for the initiation of long term adaptation to prolonged odor exposure which results in a decrease in odor seeking behavior. May regulate this process by phosphorylating tax-2, a subunit of cyclic nucleotide-gated channel tax-2/tax-4. In ASH sensory neurons, negatively regulates avoidance behavior to some bitter tastants, such as quinine, probably by phosphorylating rgs-2 and rgs-3 which are 2 regulator of G-protein signaling proteins. In AWB sensory neurons, involved in avoidance behavior to some repellent odors. In ASE left (ASEL) sensory neuron, involved in the sensing of environmental alkalinity downstream of receptor-type guanylate cyclase gcy-14. In sensory neurons, involved in the signaling pathway downstream of insulin, TGF-beta and receptor-type guanylate cyclase responsible for inducing quiescence after food intake. Might play a role in aversive olfactory learning in AWC neurons when an odor is associated with food deprivation, depending on the ins-1/age-1 signal from the AIA to the AWC neurons. Probably by regulating neuronal transmission downstream of lin-3 and receptor lin-23 and phospholipase plc-3 in ALA neurons, involved in the decrease in locomotion during the quiescent state that precedes each larval molt. The sequence is that of cGMP-dependent protein kinase egl-4 from Caenorhabditis briggsae.